Reading from the N-terminus, the 595-residue chain is Aspartate--tRNA(Asp/Asn) ligase (595 aa).

Glu178 contacts L-aspartate. An aspartate region spans residues 202–205 (QLFK). Arg224 is a binding site for L-aspartate. ATP-binding positions include 224–226 (RDE) and Gln233. Residue His458 participates in L-aspartate binding. Glu488 lines the ATP pocket. Residue Arg495 participates in L-aspartate binding. Residue 540–543 (GLDR) participates in ATP binding.

Belongs to the class-II aminoacyl-tRNA synthetase family. Type 1 subfamily. Homodimer.

The protein localises to the cytoplasm. The catalysed reaction is tRNA(Asx) + L-aspartate + ATP = L-aspartyl-tRNA(Asx) + AMP + diphosphate. Aspartyl-tRNA synthetase with relaxed tRNA specificity since it is able to aspartylate not only its cognate tRNA(Asp) but also tRNA(Asn). Reaction proceeds in two steps: L-aspartate is first activated by ATP to form Asp-AMP and then transferred to the acceptor end of tRNA(Asp/Asn). The polypeptide is Aspartate--tRNA(Asp/Asn) ligase (Trichodesmium erythraeum (strain IMS101)).